The chain runs to 271 residues: Phosphate import ATP-binding protein PstB (271 aa).

One can recognise an ABC transporter domain in the interval 25–266 (FDTKNLNLWY…PSDKRTEDYI (242 aa)). Residue 57–64 (GPSGCGKS) coordinates ATP.

The protein belongs to the ABC transporter superfamily. Phosphate importer (TC 3.A.1.7) family. In terms of assembly, the complex is composed of two ATP-binding proteins (PstB), two transmembrane proteins (PstC and PstA) and a solute-binding protein (PstS).

It localises to the cell membrane. It carries out the reaction phosphate(out) + ATP + H2O = ADP + 2 phosphate(in) + H(+). Functionally, part of the ABC transporter complex PstSACB involved in phosphate import. Responsible for energy coupling to the transport system. In Bacillus cereus (strain ATCC 14579 / DSM 31 / CCUG 7414 / JCM 2152 / NBRC 15305 / NCIMB 9373 / NCTC 2599 / NRRL B-3711), this protein is Phosphate import ATP-binding protein PstB.